Reading from the N-terminus, the 247-residue chain is 14-3-3 protein zeta (247 aa).

The protein belongs to the 14-3-3 family. In terms of assembly, homodimer.

It localises to the cytoplasm. Its function is as follows. Adapter protein implicated in the regulation of a large spectrum of both general and specialized signaling pathways. Binds to a large number of partners, usually by recognition of a phosphoserine or phosphothreonine motif. Binding generally results in the modulation of the activity of the binding partner. The sequence is that of 14-3-3 protein zeta (14-3-3zeta) from Bombyx mori (Silk moth).